A 599-amino-acid polypeptide reads, in one-letter code: Nucleolar protein dnt1 (599 aa).

S174 bears the Phosphoserine mark. Disordered regions lie at residues 210–262 and 292–599; these read TQEE…PSRL and DKSL…AALV. A compositionally biased stretch (polar residues) spans 218 to 241; that stretch reads QSFNSSLTPSQPTTYNRANFFSIN. Residues 242–251 are compositionally biased toward low complexity; the sequence is DASSDSSSDA. Residues 292–303 show a composition bias toward basic and acidic residues; that stretch reads DKSLRSSTREVS. Position 306 is a phosphoserine (S306). Acidic residues predominate over residues 307–320; it reads PNEDSVNDDSSSDV. Basic and acidic residues predominate over residues 321–333; the sequence is SDEKETEAKHEIR. Residues 344 to 354 are compositionally biased toward polar residues; it reads SHPSTAVPSEN. Low complexity predominate over residues 364–380; that stretch reads LSESSTTSISSSPSENS. Positions 390 to 401 are enriched in polar residues; the sequence is DSPNKSLVNDNV. A compositionally biased stretch (basic and acidic residues) spans 402–413; it reads SAKHDKESENGK. The span at 421-431 shows a compositional bias: polar residues; that stretch reads QTLVTTSTISA. Over residues 436–452 the composition is skewed to acidic residues; that stretch reads PSDEIGSENDSDSDSDS. A compositionally biased stretch (polar residues) spans 456–480; sequence VPLSQLQKKSQQRNSVSHEIQNRGT. Basic and acidic residues predominate over residues 483–500; the sequence is SPKEPKAKPSTERPETHR. The segment covering 501–514 has biased composition (polar residues); that stretch reads TLSYSRLSELSKTF. The residue at position 513 (T513) is a Phosphothreonine. 2 stretches are compositionally biased toward basic and acidic residues: residues 533–542 and 558–574; these read ESKEEGRSDE and NSEKEDRSNPIPVEKRA.

Post-translationally, phosphorylated by clp1.

The protein resides in the cytoplasm. It localises to the nucleus. The protein localises to the nucleolus. Its subcellular location is the cytoskeleton. It is found in the spindle. Negatively regulates the septation initiation network (SIN) pathway, independently of the cdc14 phosphatase clp1. May also have a role in silencing rDNA transcription. Required for maintaining the exclusive nucleolus localization of nuc1. The protein is Nucleolar protein dnt1 (dnt1) of Schizosaccharomyces pombe (strain 972 / ATCC 24843) (Fission yeast).